We begin with the raw amino-acid sequence, 158 residues long: Succinate dehydrogenase assembly factor 2, mitochondrial (158 aa).

Residues 1-17 (MFSANIARKVVCSVCRA) constitute a mitochondrion transit peptide.

Belongs to the SDHAF2 family. As to quaternary structure, interacts with sdha within the SDH catalytic dimer.

It is found in the mitochondrion matrix. In terms of biological role, plays an essential role in the assembly of succinate dehydrogenase (SDH), an enzyme complex (also referred to as respiratory complex II) that is a component of both the tricarboxylic acid (TCA) cycle and the mitochondrial electron transport chain, and which couples the oxidation of succinate to fumarate with the reduction of ubiquinone (coenzyme Q) to ubiquinol. Required for flavinylation (covalent attachment of FAD) of the flavoprotein subunit sdha of the SDH catalytic dimer. The polypeptide is Succinate dehydrogenase assembly factor 2, mitochondrial (Danio rerio (Zebrafish)).